A 127-amino-acid chain; its full sequence is Nitrogenase-stabilizing/protective protein NifW (127 aa).

The protein belongs to the NifW family. Homotrimer; associates with NifD.

Functionally, may protect the nitrogenase Fe-Mo protein from oxidative damage. The chain is Nitrogenase-stabilizing/protective protein NifW from Rhizobium etli (strain ATCC 51251 / DSM 11541 / JCM 21823 / NBRC 15573 / CFN 42).